A 142-amino-acid chain; its full sequence is Large ribosomal subunit protein uL11 (142 aa).

Belongs to the universal ribosomal protein uL11 family. Part of the ribosomal stalk of the 50S ribosomal subunit. Interacts with L10 and the large rRNA to form the base of the stalk. L10 forms an elongated spine to which L12 dimers bind in a sequential fashion forming a multimeric L10(L12)X complex. In terms of processing, one or more lysine residues are methylated.

Functionally, forms part of the ribosomal stalk which helps the ribosome interact with GTP-bound translation factors. The chain is Large ribosomal subunit protein uL11 from Rhodopseudomonas palustris (strain BisB18).